Here is a 379-residue protein sequence, read N- to C-terminus: Protein OSCP1 (379 aa).

As to expression, predominantly expressed in testis.

It localises to the basal cell membrane. Its function is as follows. May be involved in drug clearance in the placenta. The polypeptide is Protein OSCP1 (Oscp1) (Rattus norvegicus (Rat)).